Here is a 96-residue protein sequence, read N- to C-terminus: Cathelin (96 aa).

Gln1 is subject to Pyrrolidone carboxylic acid. Positions 31–50 (DQPPKADEDPGTPKPVSFTV) are disordered. 2 cysteine pairs are disulfide-bonded: Cys55/Cys66 and Cys73/Cys90.

Belongs to the cathelicidin family.

The protein localises to the secreted. In terms of biological role, probably a microbicidal peptide. This Sus scrofa (Pig) protein is Cathelin.